The primary structure comprises 79 residues: D-alanyl carrier protein (79 aa).

The 77-residue stretch at 1–77 (MDVKETILNI…KIISGVVELM (77 aa)) folds into the Carrier domain. O-(pantetheine 4'-phosphoryl)serine is present on Ser35.

This sequence belongs to the DltC family. Post-translationally, 4'-phosphopantetheine is transferred from CoA to a specific serine of apo-DCP.

It localises to the cytoplasm. Its pathway is cell wall biogenesis; lipoteichoic acid biosynthesis. In terms of biological role, carrier protein involved in the D-alanylation of lipoteichoic acid (LTA). The loading of thioester-linked D-alanine onto DltC is catalyzed by D-alanine--D-alanyl carrier protein ligase DltA. The DltC-carried D-alanyl group is further transferred to cell membrane phosphatidylglycerol (PG) by forming an ester bond, probably catalyzed by DltD. D-alanylation of LTA plays an important role in modulating the properties of the cell wall in Gram-positive bacteria, influencing the net charge of the cell wall. The sequence is that of D-alanyl carrier protein from Streptococcus suis (strain 98HAH33).